The following is a 299-amino-acid chain: Endonuclease 4 (299 aa).

A signal peptide spans 1-24 (MSSSLRQWFARVLVLTQLINGALC). Trp-25 and His-30 together coordinate a divalent metal cation. Position 25–30 (25–30 (WGKEGH)) interacts with substrate. Residues Cys-34 and Cys-65 are joined by a disulfide bond. The a divalent metal cation site is built by Asp-69 and His-84. Substrate-binding positions include 69-75 (DEIKHHW), 84-87 (HYVD), and 94-99 (NYEYCR). Disulfide bonds link Cys-93-Cys-246, Cys-101-Cys-111, and Cys-226-Cys-233. Substrate contacts are provided by Asn-118 and Tyr-136. An N-linked (GlcNAc...) asparagine glycan is attached at Asn-118. An N-linked (GlcNAc...) asparagine glycan is attached at Asn-137. Residues His-147, Asp-151, His-157, His-181, and Asp-185 each contribute to the a divalent metal cation site. Residues 147 to 196 (HFIGDIHQPLHVGFLGDEGGNTITVRWYRRKTNLHHVWDNMIIESALKTY) form a substrate binding region. Asn-198, Asn-211, and Asn-229 each carry an N-linked (GlcNAc...) asparagine glycan. A propeptide spans 284 to 299 (ATLNRIFSSKPKHAGS) (removed in mature form).

It belongs to the nuclease type I family. Monomer. Requires Mn(2+) as cofactor. Ca(2+) is required as a cofactor.

It catalyses the reaction Endonucleolytic cleavage to 5'-phosphomononucleotide and 5'-phosphooligonucleotide end-products.. In terms of biological role, endonuclease that can use single-stranded RNA and DNA as substrates. In contradiction with PubMed:23620482, cannot hydrolyze single-stranded DNA and does not cleave mismatches. This chain is Endonuclease 4, found in Arabidopsis thaliana (Mouse-ear cress).